We begin with the raw amino-acid sequence, 481 residues long: Dihydrolipoyl dehydrogenase (481 aa).

FAD-binding positions include 34 to 42 (EREHMGGIC) and lysine 51. Cysteine 42 and cysteine 47 are disulfide-bonded. Residues 195 to 199 (GSGAI), glutamate 218, and 284 to 287 (AVGV) each bind NAD(+). The FAD site is built by aspartate 326 and alanine 334. Catalysis depends on histidine 460, which acts as the Proton acceptor.

Belongs to the class-I pyridine nucleotide-disulfide oxidoreductase family. Homodimer. FAD is required as a cofactor.

It is found in the cytoplasm. It catalyses the reaction N(6)-[(R)-dihydrolipoyl]-L-lysyl-[protein] + NAD(+) = N(6)-[(R)-lipoyl]-L-lysyl-[protein] + NADH + H(+). Lipoamide dehydrogenase is a component of the alpha-ketoacid dehydrogenase complexes. The sequence is that of Dihydrolipoyl dehydrogenase (lpdA) from Rhizobium etli (strain ATCC 51251 / DSM 11541 / JCM 21823 / NBRC 15573 / CFN 42).